A 492-amino-acid chain; its full sequence is Putative protein disulfide-isomerase C1F5.02 (492 aa).

An N-terminal signal peptide occupies residues 1-22 (MKISNLLAAFLAFSGGFFCASA). Residues 23–128 (EVPKVNKEGL…LVKYMRKQLL (106 aa)) enclose the Thioredoxin 1 domain. Catalysis depends on nucleophile residues Cys51 and Cys54. A disulfide bond links Cys51 and Cys54. N-linked (GlcNAc...) asparagine glycosylation is found at Asn161 and Asn257. The Thioredoxin 2 domain occupies 323 to 462 (ELTAKAMTKF…LSAFIDKHAS (140 aa)). Catalysis depends on nucleophile residues Cys385 and Cys388. A disulfide bond links Cys385 and Cys388. The segment at 468 to 492 (KEKESVPAPDLEDQVAVEDEMADEL) is disordered. The span at 477 to 492 (DLEDQVAVEDEMADEL) shows a compositional bias: acidic residues. The short motif at 489 to 492 (ADEL) is the Prevents secretion from ER element.

The protein belongs to the protein disulfide isomerase family.

It is found in the endoplasmic reticulum lumen. It carries out the reaction Catalyzes the rearrangement of -S-S- bonds in proteins.. In terms of biological role, participates in the folding of proteins containing disulfide bonds, may be involved in glycosylation, prolyl hydroxylation and triglyceride transfer. This chain is Putative protein disulfide-isomerase C1F5.02, found in Schizosaccharomyces pombe (strain 972 / ATCC 24843) (Fission yeast).